The following is a 126-amino-acid chain: Large ribosomal subunit protein bL12 (126 aa).

This sequence belongs to the bacterial ribosomal protein bL12 family. Homodimer. Part of the ribosomal stalk of the 50S ribosomal subunit. Forms a multimeric L10(L12)X complex, where L10 forms an elongated spine to which 2 to 4 L12 dimers bind in a sequential fashion. Binds GTP-bound translation factors.

Forms part of the ribosomal stalk which helps the ribosome interact with GTP-bound translation factors. Is thus essential for accurate translation. This is Large ribosomal subunit protein bL12 from Paracidovorax citrulli (strain AAC00-1) (Acidovorax citrulli).